The chain runs to 168 residues: DAZ-associated protein 2 (168 aa).

A compositionally biased stretch (low complexity) spans 1–13 (MNSKGQYPTQPTY). The interval 1 to 25 (MNSKGQYPTQPTYPVQPPGNPVYPQ) is disordered. The short motif at 39–42 (PPAY) is the PPAY element. Position 77 is a phosphoserine (Ser-77).

Interacts with SOX6. Interacts with DAZ1 and DAZL. Interacts with IL17RB. May interact with FAM168B. Interacts with INCA1. Interacts with EIF4G1 and EIF4G2. Interacts (via PPAY motif) with NEDD4 (via WW domains). Interacts with transcription factor TCF4; the interaction results in localization of DAZAP2 to the nucleus. Interacts with transcription factors TCF7 and TCF7L1. Interacts with transcription factor LEF1. Interacts with serine/threonine-protein kinase HIPK2; the interaction results in phosphorylation of DAZAP2 which causes localization of DAZAP2 to the nucleus, reduces interaction of DAZAP2 with HIPK2 and prevents DAZAP2-dependent degradation of HIPK2. Interacts with ubiquitin ligase SIAH1; the interaction is decreased following phosphorylation of DAZAP2 by HIPK2. Interacts with TP53; the interaction is triggered by DNA damage. Post-translationally, ubiquitinated by SMURF2, leading to proteasomal degradation. Ubiquitinated by NEDD4, leading to proteasomal degradation. Following DNA damage, phosphorylated by HIPK2 which promotes DAZAP2 localization to the nucleus, reduces interaction of DAZAP2 with HIPK2 and SIAH1, and prevents DAZAP2-dependent ubiquitination of HIPK2 by E3 ubiquitin-protein ligase SIAH1 and subsequent HIPK2 proteasomal degradation.

It localises to the cytoplasm. It is found in the nucleus. Its subcellular location is the nucleus speckle. The protein localises to the nuclear body. The protein resides in the stress granule. Functionally, in unstressed cells, promotes SIAH1-mediated polyubiquitination and degradation of the serine/threonine-protein kinase HIPK2, probably by acting as a loading factor that potentiates complex formation between HIPK2 and ubiquitin ligase SIAH1. In response to DNA damage, localizes to the nucleus following phosphorylation by HIPK2 and modulates the expression of a subset of TP53/p53 target genes by binding to TP53 at target gene promoters. This limits the expression of a number of cell death-mediating TP53 target genes, reducing DNA damage-induced cell death. Enhances the binding of transcription factor TCF7L2/TCF4, a Wnt signaling pathway effector, to the promoters of target genes. Plays a role in stress granule formation. This is DAZ-associated protein 2 from Bos taurus (Bovine).